Reading from the N-terminus, the 254-residue chain is Small ribosomal subunit protein uS2 (254 aa).

Belongs to the universal ribosomal protein uS2 family.

The sequence is that of Small ribosomal subunit protein uS2 from Borrelia duttonii (strain Ly).